We begin with the raw amino-acid sequence, 485 residues long: RAC-beta serine/threonine-protein kinase B (485 aa).

Positions 5–109 (MVIKEGWLQK…WIIAIQTVAN (105 aa)) constitute a PH domain. O-linked (GlcNAc) serine glycosylation is found at Ser-132 and Ser-135. Positions 156–413 (FDYLKLLGKG…AQEVMSHGFF (258 aa)) constitute a Protein kinase domain. ATP is bound by residues 162–170 (LGKGTFGKV) and Lys-185. Asp-279 acts as the Proton acceptor in catalysis. O-linked (GlcNAc) threonine glycosylation occurs at Thr-310. Residue Thr-313 is modified to Phosphothreonine. An O-linked (GlcNAc) threonine glycan is attached at Thr-317. The AGC-kinase C-terminal domain maps to 414–485 (ASINWQDVTE…QFSYSSSIRE (72 aa)). The interval 454 to 485 (LTPPDRYDNLDALESEQRPHFPQFSYSSSIRE) is disordered. Basic and acidic residues predominate over residues 458 to 472 (DRYDNLDALESEQRP). Ser-478 is subject to Phosphoserine. An O-linked (GlcNAc) serine; alternate glycan is attached at Ser-478.

This sequence belongs to the protein kinase superfamily. AGC Ser/Thr protein kinase family. RAC subfamily. Post-translationally, phosphorylation on Thr-313 and Ser-478 is required for full activity. Phosphorylation of the activation loop at Thr-313 by PDPK1/PDK1 is a prerequisite for full activation. Phosphorylation by mTORC2 at Ser-478 in response to growth factors plays a key role in AKT1 activation by facilitating subsequent phosphorylation of the activation loop by PDPK1/PDK1.

The catalysed reaction is L-seryl-[protein] + ATP = O-phospho-L-seryl-[protein] + ADP + H(+). The enzyme catalyses L-threonyl-[protein] + ATP = O-phospho-L-threonyl-[protein] + ADP + H(+). Two specific sites, one in the kinase domain (Thr-313) and the other in the C-terminal regulatory region (Ser-478), need to be phosphorylated for its full activation. In terms of biological role, akt2-b is one of several closely related serine/threonine-protein kinases known as the AKT kinase, and which regulate many processes including metabolism, proliferation, cell survival, growth and angiogenesis. This is mediated through serine and/or threonine phosphorylation of a range of downstream substrates. Over 100 substrate candidates have been reported so far, but for most of them, no isoform specificity has been reported. May be involved in the inhibition of ciliogenesis. The chain is RAC-beta serine/threonine-protein kinase B (akt2-b) from Xenopus laevis (African clawed frog).